The primary structure comprises 397 residues: MAKAKFERTKPHVNIGTIGHIDHGKTTLTAAITKVLHDQHPDLNPYMPFDEIDKAPEEKARGITISIAHVEYQTEARHYAHVDCPGHADYIKNMITGAAQMDGAILVVAATDGPMPQTREHVLLARQVGVPYIVVALNKSDMVDDEELLELVELEVRELLSSQEYPGDDLPVVRVSALKALEGDPEWAGKLMELMTAVDTSIPQPERETEKPFLMPIEDVFTITGRGTVVTGRAERGILKPNEEVELVGIREKSTKTTCTGIEMFRKLLDEARAGENVGLLLRGVKREDVERGMVVIKPGTATPHTEFEATVYILSKEEGGRHTPFFQNYRPQFYFRTTDVTGVVTLPEGTEMVMPGDNTTMTVKLIQPIAMEENLKFAIREGGRTVGAGRVTKIIK.

Residues 10–206 (KPHVNIGTIG…AVDTSIPQPE (197 aa)) form the tr-type G domain. The tract at residues 19–26 (GHIDHGKT) is G1. Residue 19–26 (GHIDHGKT) participates in GTP binding. A Mg(2+)-binding site is contributed by threonine 26. The interval 62–66 (GITIS) is G2. The G3 stretch occupies residues 83-86 (DCPG). GTP is bound by residues 83-87 (DCPGH) and 138-141 (NKSD). The tract at residues 138–141 (NKSD) is G4. The tract at residues 176 to 178 (SAL) is G5.

It belongs to the TRAFAC class translation factor GTPase superfamily. Classic translation factor GTPase family. EF-Tu/EF-1A subfamily. As to quaternary structure, monomer.

It localises to the cytoplasm. It catalyses the reaction GTP + H2O = GDP + phosphate + H(+). GTP hydrolase that promotes the GTP-dependent binding of aminoacyl-tRNA to the A-site of ribosomes during protein biosynthesis. In Salinispora arenicola (strain CNS-205), this protein is Elongation factor Tu.